We begin with the raw amino-acid sequence, 298 residues long: L-xylulose reductase (298 aa).

NADP(+) contacts are provided by Ile-19, Asp-68, and Asn-103. Catalysis depends on proton donor residues Ser-161, Ser-162, and Tyr-175. Tyr-175, Lys-179, and Val-207 together coordinate NADP(+). Lys-179 acts as the Lowers pKa of active site Tyr in catalysis.

The protein belongs to the short-chain dehydrogenases/reductases (SDR) family.

It catalyses the reaction xylitol + NADP(+) = L-xylulose + NADPH + H(+). It functions in the pathway carbohydrate degradation; L-arabinose degradation via L-arabinitol; D-xylulose 5-phosphate from L-arabinose (fungal route): step 3/5. Functionally, L-xylulose reductase involved in the catabolism of L-arabinose through an oxidoreductive pathway. Catalyzes the NADPH-dependent reduction of L-xylulose. The sequence is that of L-xylulose reductase from Aspergillus niger (strain ATCC 1015 / CBS 113.46 / FGSC A1144 / LSHB Ac4 / NCTC 3858a / NRRL 328 / USDA 3528.7).